We begin with the raw amino-acid sequence, 553 residues long: MAKLLKFSDESRAALERGMNALADAVRVTIGPRGRNVVLEKSFGAPDIVNDGDTIAKEIDLEDPFENIGAKLIQQVASKTKDKAGDGTTTATVLAQAMVEEGLRNTAAGASPIELRRGMEKAVALIVKGLGERSQSVSGDAIRQVATVSAGGDDEVGRMVAEAMDKVTVDGVITVEESKSLATELEVTEGMAFDRGYSSPYFVTDGDRQICEFENALLLLTDRKISAVADLVPVLETVQKTGSPLVILAEEVDGEALATLVVNKNRGVLQVAAVRAPSFGERRKAALADIAILTGGTVISEDRAMTLDKVTLEDLGRARRITISKEETTIVASEDSRDAVAERVASIRRELENSDSEYDREKLNERIAKLAGGVAVIKVGAPTETELKNRKLRIEDALNATRAAVEEGIVAGGGSTLIQLAGSLDGLANQLHGDQRTGVEIVHRALSAPLRQIAINAGANGDVVVEQVQRSGQGFNALTGGYENLLEAGILDAAKVVRLGLQDAVSIASLLITTEVVVADKPEPPAAPAPGGDPMGGMGGMGGMGGMGMPGMM.

Residues 29 to 32, 86 to 90, Gly-413, 476 to 478, and Asp-492 contribute to the ATP site; these read TIGP, DGTTT, and NAL. Residues 521–542 are disordered; that stretch reads KPEPPAAPAPGGDPMGGMGGMG. The span at 533 to 542 shows a compositional bias: gly residues; sequence DPMGGMGGMG.

The protein belongs to the chaperonin (HSP60) family. Forms a cylinder of 14 subunits composed of two heptameric rings stacked back-to-back. Interacts with the co-chaperonin GroES.

Its subcellular location is the cytoplasm. It catalyses the reaction ATP + H2O + a folded polypeptide = ADP + phosphate + an unfolded polypeptide.. Functionally, together with its co-chaperonin GroES, plays an essential role in assisting protein folding. The GroEL-GroES system forms a nano-cage that allows encapsulation of the non-native substrate proteins and provides a physical environment optimized to promote and accelerate protein folding. The chain is Chaperonin GroEL 1 from Synechococcus sp. (strain WH7803).